The primary structure comprises 180 residues: Protein sll1483 (180 aa).

A signal peptide spans 1–26 (MKTAARIVAFTALTGFALGMPTVAMA). Residues 45–176 (AMTIVEVAAG…GVIHVIDQVI (132 aa)) enclose the FAS1 domain.

In Synechocystis sp. (strain ATCC 27184 / PCC 6803 / Kazusa), this protein is Protein sll1483.